The primary structure comprises 207 residues: High frequency lysogenization protein HflD homolog (207 aa).

The protein belongs to the HflD family.

It localises to the cytoplasm. The protein resides in the cell inner membrane. The protein is High frequency lysogenization protein HflD homolog of Teredinibacter turnerae (strain ATCC 39867 / T7901).